The primary structure comprises 258 residues: uncharacterized protein (258 aa).

A run of 4 helical transmembrane segments spans residues 33–53 (LFVI…VTTN), 59–79 (FDSW…IFVF), 88–108 (LLYL…FSFF), and 140–160 (IIAL…WLIQ). The tract at residues 237-258 (NNKINSELQPPSILNKNSKPIE) is disordered. The span at 242-258 (SELQPPSILNKNSKPIE) shows a compositional bias: polar residues.

Its subcellular location is the membrane. This is an uncharacterized protein from Dictyostelium discoideum (Social amoeba).